The sequence spans 177 residues: Large ribosomal subunit protein uL6 (177 aa).

Belongs to the universal ribosomal protein uL6 family. As to quaternary structure, part of the 50S ribosomal subunit.

In terms of biological role, this protein binds to the 23S rRNA, and is important in its secondary structure. It is located near the subunit interface in the base of the L7/L12 stalk, and near the tRNA binding site of the peptidyltransferase center. The chain is Large ribosomal subunit protein uL6 from Rubrobacter xylanophilus (strain DSM 9941 / JCM 11954 / NBRC 16129 / PRD-1).